The primary structure comprises 462 residues: uncharacterized protein (462 aa).

This is an uncharacterized protein from Acanthamoeba polyphaga (Amoeba).